Reading from the N-terminus, the 940-residue chain is UvrABC system protein A (940 aa).

An ATP-binding site is contributed by 31 to 38 (GLSGSGKS). The C4-type zinc finger occupies 252–279 (CPHCGYSMQELEPRLFSFNNPAGACGTC). 2 ABC transporter domains span residues 309 to 586 (WDQK…PDSL) and 606 to 936 (RDKN…RFLK). ATP is bound at residue 639-646 (GVSGSGKS). Residues 739–765 (CEACQGDGVIKVEMHFLPDVYVPCDVC) form a C4-type zinc finger.

It belongs to the ABC transporter superfamily. UvrA family. As to quaternary structure, forms a heterotetramer with UvrB during the search for lesions.

It localises to the cytoplasm. The UvrABC repair system catalyzes the recognition and processing of DNA lesions. UvrA is an ATPase and a DNA-binding protein. A damage recognition complex composed of 2 UvrA and 2 UvrB subunits scans DNA for abnormalities. When the presence of a lesion has been verified by UvrB, the UvrA molecules dissociate. In Vibrio vulnificus (strain YJ016), this protein is UvrABC system protein A.